Consider the following 250-residue polypeptide: tRNA pseudouridine synthase A (250 aa).

Aspartate 52 serves as the catalytic Nucleophile. Tyrosine 111 contributes to the substrate binding site.

The protein belongs to the tRNA pseudouridine synthase TruA family. In terms of assembly, homodimer.

The catalysed reaction is uridine(38/39/40) in tRNA = pseudouridine(38/39/40) in tRNA. Functionally, formation of pseudouridine at positions 38, 39 and 40 in the anticodon stem and loop of transfer RNAs. This is tRNA pseudouridine synthase A from Methylorubrum extorquens (strain CM4 / NCIMB 13688) (Methylobacterium extorquens).